The primary structure comprises 459 residues: Ribulose bisphosphate carboxylase large chain (459 aa).

The residue at position 4 (Lys4) is an N6,N6,N6-trimethyllysine. The substrate site is built by Asn113 and Thr163. The active-site Proton acceptor is the Lys165. Residue Lys167 coordinates substrate. 3 residues coordinate Mg(2+): Lys191, Asp193, and Glu194. At Lys191 the chain carries N6-carboxylysine. His284 functions as the Proton acceptor in the catalytic mechanism. 3 residues coordinate substrate: Arg285, His317, and Ser369.

Belongs to the RuBisCO large chain family. Type I subfamily. As to quaternary structure, heterohexadecamer of 8 large chains and 8 small chains; disulfide-linked. The disulfide link is formed within the large subunit homodimers. The cofactor is Mg(2+). Post-translationally, the disulfide bond which can form in the large chain dimeric partners within the hexadecamer appears to be associated with oxidative stress and protein turnover.

It is found in the plastid. Its subcellular location is the chloroplast. The catalysed reaction is 2 (2R)-3-phosphoglycerate + 2 H(+) = D-ribulose 1,5-bisphosphate + CO2 + H2O. It carries out the reaction D-ribulose 1,5-bisphosphate + O2 = 2-phosphoglycolate + (2R)-3-phosphoglycerate + 2 H(+). RuBisCO catalyzes two reactions: the carboxylation of D-ribulose 1,5-bisphosphate, the primary event in carbon dioxide fixation, as well as the oxidative fragmentation of the pentose substrate in the photorespiration process. Both reactions occur simultaneously and in competition at the same active site. This is Ribulose bisphosphate carboxylase large chain from Nyssa ogeche (Ogeechee tupelo).